A 659-amino-acid chain; its full sequence is Tetratricopeptide repeat protein 30 homolog (659 aa).

7 TPR repeats span residues 3 to 36 (SQNMLIRDGEYTKSIYTMIKEERFQEAINVLNGI), 43 to 76 (RAGLSLLGHCYYQTQDFIEASNCYEYLVNLVPDV), 143 to 176 (ATVKNDEGCLLFQANMFEDALQRYVSALQAGGFN), 178 to 210 (HIAYNAALCHYRKKENSQALNYIAEIVERGIRN), 391 to 424 (CRSAPDQNALRVALREYEFALESYLPVAMARAWI), 450 to 483 (TWRLHAAHVLFMRGDRYKEAAAFYEPIVRQNYDD), and 533 to 566 (CIVNLVIGTLYCAKGNYEFGLSRIAHALDGGSGA).

The protein belongs to the TTC30/dfy-1/fleer family.

It localises to the cell projection. It is found in the cilium. In terms of biological role, required for polyglutamylation of axonemal tubulin in sensory cilia. Plays a role in anterograde intraflagellar transport (IFT), the process by which cilia precursors are transported from the base of the cilium to the site of their incorporation at the tip. The protein is Tetratricopeptide repeat protein 30 homolog of Aedes aegypti (Yellowfever mosquito).